The sequence spans 197 residues: Probable UbiX-like flavin prenyltransferase (197 aa).

FMN contacts are provided by residues 9 to 11 (GAT), Ser36, 87 to 90 (SMKT), and Arg122.

This sequence belongs to the UbiX/PAD1 family. YclB subfamily. As to quaternary structure, homododecamer.

It carries out the reaction dimethylallyl phosphate + FMNH2 = prenylated FMNH2 + phosphate. In terms of biological role, flavin prenyltransferase that catalyzes the synthesis of the prenylated FMN cofactor (prenyl-FMN) for phenolic acid decarboxylase C. Involved in the decarboxylation and detoxification of phenolic derivatives under both aerobic and anaerobic conditions. The sequence is that of Probable UbiX-like flavin prenyltransferase (ecdB) from Escherichia coli O111:H-.